Consider the following 314-residue polypeptide: Porphobilinogen deaminase (314 aa).

Cys243 is modified (S-(dipyrrolylmethanemethyl)cysteine).

Belongs to the HMBS family. Monomer. It depends on dipyrromethane as a cofactor.

The enzyme catalyses 4 porphobilinogen + H2O = hydroxymethylbilane + 4 NH4(+). It functions in the pathway porphyrin-containing compound metabolism; protoporphyrin-IX biosynthesis; coproporphyrinogen-III from 5-aminolevulinate: step 2/4. In terms of biological role, tetrapolymerization of the monopyrrole PBG into the hydroxymethylbilane pre-uroporphyrinogen in several discrete steps. The sequence is that of Porphobilinogen deaminase from Bordetella bronchiseptica (strain ATCC BAA-588 / NCTC 13252 / RB50) (Alcaligenes bronchisepticus).